A 396-amino-acid chain; its full sequence is S-adenosylmethionine synthase 4 (396 aa).

Residue glutamate 13 participates in Mg(2+) binding. An ATP-binding site is contributed by histidine 19. Position 47 (glutamate 47) interacts with K(+). Glutamate 60 and glutamine 103 together coordinate L-methionine. ATP contacts are provided by residues 171–173 (DGK), 239–242 (SGRF), aspartate 250, 256–257 (RK), alanine 273, lysine 277, and lysine 281. Aspartate 250 provides a ligand contact to L-methionine. Lysine 281 lines the L-methionine pocket.

Belongs to the AdoMet synthase family. Homotetramer. It depends on Mn(2+) as a cofactor. The cofactor is Mg(2+). Co(2+) serves as cofactor. K(+) is required as a cofactor. In terms of tissue distribution, expressed in roots, stems and leaves (at protein level).

Its subcellular location is the cytoplasm. The enzyme catalyses L-methionine + ATP + H2O = S-adenosyl-L-methionine + phosphate + diphosphate. The protein operates within amino-acid biosynthesis; S-adenosyl-L-methionine biosynthesis; S-adenosyl-L-methionine from L-methionine: step 1/1. Its function is as follows. Catalyzes the formation of S-adenosylmethionine from methionine and ATP. The reaction comprises two steps that are both catalyzed by the same enzyme: formation of S-adenosylmethionine (AdoMet) and triphosphate, and subsequent hydrolysis of the triphosphate. May be involved in the synthesis of betain in response to abiotic stress such as high salinity. The sequence is that of S-adenosylmethionine synthase 4 (SAMS4) from Atriplex nummularia (Old man saltbush).